A 216-amino-acid chain; its full sequence is Thiopurine S-methyltransferase (216 aa).

Residues tryptophan 10, leucine 45, glutamate 66, and arginine 123 each contribute to the S-adenosyl-L-methionine site.

The protein belongs to the class I-like SAM-binding methyltransferase superfamily. TPMT family.

Its subcellular location is the cytoplasm. It catalyses the reaction S-adenosyl-L-methionine + a thiopurine = S-adenosyl-L-homocysteine + a thiopurine S-methylether.. This is Thiopurine S-methyltransferase from Pseudomonas putida (strain GB-1).